The sequence spans 199 residues: Recombination protein RecR (199 aa).

The segment at 58 to 73 (CQTCHHLSAEPTCEIC) adopts a C4-type zinc-finger fold. The region spanning 81-175 (GQICVVADSR…RVSRIAYGLP (95 aa)) is the Toprim domain.

It belongs to the RecR family.

Functionally, may play a role in DNA repair. It seems to be involved in an RecBC-independent recombinational process of DNA repair. It may act with RecF and RecO. This chain is Recombination protein RecR, found in Synechococcus sp. (strain WH7803).